The chain runs to 254 residues: Alcohol dehydrogenase 2 (254 aa).

An NAD(+)-binding site is contributed by 10-33 (FVAGLGGIGFDTSREIVKSGPKNL). Ser-138 contacts substrate. Residue Tyr-151 is the Proton acceptor of the active site.

Belongs to the short-chain dehydrogenases/reductases (SDR) family. Homodimer.

It catalyses the reaction a primary alcohol + NAD(+) = an aldehyde + NADH + H(+). It carries out the reaction a secondary alcohol + NAD(+) = a ketone + NADH + H(+). The protein is Alcohol dehydrogenase 2 (Adh2) of Drosophila wheeleri (Fruit fly).